A 242-amino-acid chain; its full sequence is Eukaryotic translation initiation factor 4E type 1B (242 aa).

Positions 1 to 42 (MLAVEVSEAEGGIREWEEEEKEEEAAERTPTGEKSPNSPRTL) are disordered. Acidic residues predominate over residues 16 to 25 (WEEEEKEEEA). Residues 32-41 (GEKSPNSPRT) show a composition bias toward polar residues. Positions 62-65 (HPLQ) are EIF4EBP1/2/3 binding. 81 to 82 (WQ) serves as a coordination point for mRNA. The EIF4EBP1/2/3 binding stretch occupies residues 98–102 (WALYS). Position 127 to 128 (127 to 128 (WE)) interacts with mRNA. The interval 157 to 164 (ETLLCLIG) is EIF4EBP1/2/3 binding. Residues 182-187 (RTKGDK) and 230-232 (TKS) contribute to the mRNA site.

The protein belongs to the eukaryotic initiation factor 4E family. As to quaternary structure, eIF4F is a multi-subunit complex, the composition of which varies with external and internal environmental conditions. It is composed of at least EIF4A, EIF4E and EIF4G.

In terms of biological role, recognizes and binds the 7-methylguanosine-containing mRNA cap during an early step in the initiation of protein synthesis and facilitates ribosome binding by inducing the unwinding of the mRNAs secondary structure. This Homo sapiens (Human) protein is Eukaryotic translation initiation factor 4E type 1B (EIF4E1B).